The following is a 571-amino-acid chain: Proline--tRNA ligase (571 aa).

This sequence belongs to the class-II aminoacyl-tRNA synthetase family. ProS type 1 subfamily. In terms of assembly, homodimer.

It localises to the cytoplasm. The enzyme catalyses tRNA(Pro) + L-proline + ATP = L-prolyl-tRNA(Pro) + AMP + diphosphate. In terms of biological role, catalyzes the attachment of proline to tRNA(Pro) in a two-step reaction: proline is first activated by ATP to form Pro-AMP and then transferred to the acceptor end of tRNA(Pro). As ProRS can inadvertently accommodate and process non-cognate amino acids such as alanine and cysteine, to avoid such errors it has two additional distinct editing activities against alanine. One activity is designated as 'pretransfer' editing and involves the tRNA(Pro)-independent hydrolysis of activated Ala-AMP. The other activity is designated 'posttransfer' editing and involves deacylation of mischarged Ala-tRNA(Pro). The misacylated Cys-tRNA(Pro) is not edited by ProRS. In Pseudomonas syringae pv. tomato (strain ATCC BAA-871 / DC3000), this protein is Proline--tRNA ligase.